The sequence spans 487 residues: ATP-dependent RNA helicase DBP3 (487 aa).

The tract at residues 1-40 (MAKRSRNMESNSERSSRPKKKSKGDAKPEQPPYVQSAELD) is disordered. The short motif at 71-98 (TAFSYLPSDSNQLYGPLEHFSKPTPIQS) is the Q motif element. The region spanning 101 to 276 (WPYLFAGRDV…TTFMKEPVTV (176 aa)) is the Helicase ATP-binding domain. ATP is bound at residue 114-121 (AETGSGKT). The DEAD box signature appears at 222 to 225 (DEAD). Positions 291 to 456 (RIKQIVEVVK…DIPEALLKFG (166 aa)) constitute a Helicase C-terminal domain.

The protein belongs to the DEAD box helicase family. DDX5/DBP2 subfamily.

Its subcellular location is the nucleus. The protein resides in the nucleolus. The catalysed reaction is ATP + H2O = ADP + phosphate + H(+). Functionally, ATP-dependent RNA helicase required for 60S ribosomal subunit synthesis. Involved in efficient pre-rRNA processing, predominantly at site A3, which is necessary for the normal formation of 25S and 5.8S rRNAs. The polypeptide is ATP-dependent RNA helicase DBP3 (DBP3) (Ajellomyces capsulatus (strain NAm1 / WU24) (Darling's disease fungus)).